A 300-amino-acid chain; its full sequence is Ribosomal RNA small subunit methyltransferase A (300 aa).

Positions 36, 38, 63, 84, 113, and 131 each coordinate S-adenosyl-L-methionine.

Belongs to the class I-like SAM-binding methyltransferase superfamily. rRNA adenine N(6)-methyltransferase family. RsmA subfamily.

Its subcellular location is the cytoplasm. It carries out the reaction adenosine(1518)/adenosine(1519) in 16S rRNA + 4 S-adenosyl-L-methionine = N(6)-dimethyladenosine(1518)/N(6)-dimethyladenosine(1519) in 16S rRNA + 4 S-adenosyl-L-homocysteine + 4 H(+). Specifically dimethylates two adjacent adenosines (A1518 and A1519) in the loop of a conserved hairpin near the 3'-end of 16S rRNA in the 30S particle. May play a critical role in biogenesis of 30S subunits. The sequence is that of Ribosomal RNA small subunit methyltransferase A from Kineococcus radiotolerans (strain ATCC BAA-149 / DSM 14245 / SRS30216).